A 583-amino-acid polypeptide reads, in one-letter code: Radixin (583 aa).

In terms of domain architecture, FERM spans 5–295; the sequence is INVRVTTMDA…GNHELYMRRR (291 aa). 60–63 provides a ligand contact to a 1,2-diacyl-sn-glycero-3-phospho-(1D-myo-inositol); sequence KLNK. An N6-succinyllysine modification is found at Lys-83. An a 1,2-diacyl-sn-glycero-3-phospho-(1D-myo-inositol)-binding site is contributed by Lys-278. Disordered regions lie at residues 310–330, 376–407, and 462–526; these read REEK…KKKR, DQER…AKQA, and ELKT…RVKK. Positions 376 to 400 are enriched in basic and acidic residues; that stretch reads DQERKRAKEEAERLEKERRAAEEAK. A compositionally biased stretch (pro residues) spans 469 to 480; sequence APPPPPPPPVIP. Composition is skewed to basic and acidic residues over residues 483–492 and 506–525; these read ENEHDEHDEN and MNHR…ERVK. Thr-564 bears the Phosphothreonine; by ROCK2 mark.

In terms of assembly, binds NHERF1. Interacts with NHERF1, NHERF2, LAYN, MME/NEP and ICAM2. Interacts with CPNE1 (via VWFA domain) and CPNE4 (via VWFA domain). Interacts (via FERM domain) with SPN/CD43 cytoplasmic tail. Interacts with CD44. Interacts with CLIC5; may work together in a complex which also includes EZR and MYO6 to stabilize linkages between the plasma membrane and subjacent actin cytoskeleton at the base of stereocilia. Phosphorylated by tyrosine-protein kinases. Phosphorylation by ROCK2 suppresses the head-to-tail association of the N-terminal and C-terminal halves resulting in an opened conformation which is capable of actin and membrane-binding.

It localises to the cell membrane. The protein resides in the cytoplasm. Its subcellular location is the cytoskeleton. It is found in the cleavage furrow. The protein localises to the cell projection. It localises to the microvillus. The protein resides in the stereocilium. A head-to-tail association, of the N-terminal and C-terminal halves results in a closed conformation (inactive form) which is incapable of actin or membrane-binding. Probably plays a crucial role in the binding of the barbed end of actin filaments to the plasma membrane. This Homo sapiens (Human) protein is Radixin (RDX).